The sequence spans 342 residues: Mitochondrial sorting homolog (342 aa).

Residues methionine 1 to glutamate 6 are Mitochondrial intermembrane-facing. Residues leucine 7–valine 25 form a helical membrane-spanning segment. The Cytoplasmic portion of the chain corresponds to arginine 26–aspartate 342. Residue glycine 124–threonine 131 coordinates ATP.

Belongs to the AAA ATPase family.

It localises to the mitochondrion outer membrane. Its function is as follows. Involved in intramitochondrial sorting of proteins. In Caenorhabditis elegans, this protein is Mitochondrial sorting homolog (mspn-1).